A 622-amino-acid chain; its full sequence is Chaperone protein HscA homolog (622 aa).

It belongs to the heat shock protein 70 family.

In terms of biological role, chaperone involved in the maturation of iron-sulfur cluster-containing proteins. Has a low intrinsic ATPase activity which is markedly stimulated by HscB. The polypeptide is Chaperone protein HscA homolog (Burkholderia lata (strain ATCC 17760 / DSM 23089 / LMG 22485 / NCIMB 9086 / R18194 / 383)).